The primary structure comprises 127 residues: Small ribosomal subunit protein uS13 (127 aa).

The segment covering 95–118 (GLPVRGQRTHTNARTRKGPKKGLV) has biased composition (basic residues). Positions 95–127 (GLPVRGQRTHTNARTRKGPKKGLVRKAAAPAPK) are disordered.

The protein belongs to the universal ribosomal protein uS13 family. Part of the 30S ribosomal subunit. Forms a loose heterodimer with protein S19. Forms two bridges to the 50S subunit in the 70S ribosome.

Located at the top of the head of the 30S subunit, it contacts several helices of the 16S rRNA. In the 70S ribosome it contacts the 23S rRNA (bridge B1a) and protein L5 of the 50S subunit (bridge B1b), connecting the 2 subunits; these bridges are implicated in subunit movement. Contacts the tRNAs in the A and P-sites. The chain is Small ribosomal subunit protein uS13 from Anaeromyxobacter sp. (strain Fw109-5).